Consider the following 243-residue polypeptide: Protein VERNALIZATION 1 (243 aa).

Residues 1–61 (MGRGKVQLKR…GKLYEFATDS (61 aa)) enclose the MADS-box domain. Residues 88–178 (QGNWCHEYRK…QKELVEKQKA (91 aa)) enclose the K-box domain. The stretch at 122-178 (LKELQQLEQQLESSLKHIRSRKNQLMHESISELQRKERSLQEENKALQKELVEKQKA) forms a coiled coil. The tract at residues 173-243 (VEKQKAHTQQ…PPWMVSHISG (71 aa)) is disordered. Positions 179–192 (HTQQAQWEQTHPQT) are enriched in polar residues.

The protein resides in the nucleus. Functionally, component of a grass-specific mechanism of vernalization, a process by which prolonged cold exposure provides competence to flower in daylengths longer than 12 hours. Involved in the exit of vernalization and confers flowering competency at the expense of freezing tolerance, probably by promoting the expression of VRN3; this process is essential in cv. Bd29-1 for flowering but seems do not occur in cv. Bd21. This is Protein VERNALIZATION 1 from Brachypodium distachyon (Purple false brome).